Reading from the N-terminus, the 139-residue chain is Small ribosomal subunit protein uS12 (139 aa).

Aspartate 102 carries the 3-methylthioaspartic acid modification.

The protein belongs to the universal ribosomal protein uS12 family. Part of the 30S ribosomal subunit. Contacts proteins S8 and S17. May interact with IF1 in the 30S initiation complex.

Functionally, with S4 and S5 plays an important role in translational accuracy. In terms of biological role, interacts with and stabilizes bases of the 16S rRNA that are involved in tRNA selection in the A site and with the mRNA backbone. Located at the interface of the 30S and 50S subunits, it traverses the body of the 30S subunit contacting proteins on the other side and probably holding the rRNA structure together. The combined cluster of proteins S8, S12 and S17 appears to hold together the shoulder and platform of the 30S subunit. The chain is Small ribosomal subunit protein uS12 from Phytoplasma australiense.